The sequence spans 405 residues: Farnesyl pyrophosphate synthase (405 aa).

Positions 158 and 162 each coordinate Mg(2+). A DDXXD motif motif is present at residues 158–162; it reads DDLAD.

The protein belongs to the FPP/GGPP synthase family. It depends on Mg(2+) as a cofactor.

The enzyme catalyses isopentenyl diphosphate + (2E)-geranyl diphosphate = (2E,6E)-farnesyl diphosphate + diphosphate. The protein operates within pheromone biosynthesis. In terms of biological role, farnesyl pyrophosphate synthase involved in murgantiol biosynthesis, a male-released aggregation pheromone, by catalyzing the formation of (2E,6E)-farnesyl diphosphate. The protein is Farnesyl pyrophosphate synthase of Murgantia histrionica (Harlequin bug).